Consider the following 103-residue polypeptide: MYAVVKTGGKQYKVAAGEKLKVEQIPADVGAEITLDQVLAVGAGDQLKVGAPLVSGAAVKATVISHGRHDKVKIFKMRRRKHYQKHQGHRQNYTELRIDSIVA.

This sequence belongs to the bacterial ribosomal protein bL21 family. In terms of assembly, part of the 50S ribosomal subunit. Contacts protein L20.

In terms of biological role, this protein binds to 23S rRNA in the presence of protein L20. The protein is Large ribosomal subunit protein bL21 of Ralstonia nicotianae (strain ATCC BAA-1114 / GMI1000) (Ralstonia solanacearum).